The following is a 449-amino-acid chain: Omega-amino acid--pyruvate aminotransferase (449 aa).

Substrate is bound at residue Trp60. Pyridoxal 5'-phosphate is bound at residue 119 to 120; it reads GS. Lys288 bears the N6-(pyridoxal phosphate)lysine mark. A pyridoxal 5'-phosphate-binding site is contributed by Thr327. Substrate-binding residues include Arg414 and Gln421.

This sequence belongs to the class-III pyridoxal-phosphate-dependent aminotransferase family. As to quaternary structure, homotetramer. It depends on pyridoxal 5'-phosphate as a cofactor.

It carries out the reaction 3-oxopropanoate + L-alanine = beta-alanine + pyruvate. In terms of biological role, catalyzes transamination between a variety of omega-amino acids, mono and diamines, and pyruvate. Plays a pivotal role in the metabolism of the omega amino acids. This chain is Omega-amino acid--pyruvate aminotransferase, found in Pseudomonas putida (Arthrobacter siderocapsulatus).